A 71-amino-acid chain; its full sequence is Translation initiation factor IF-1 (71 aa).

One can recognise an S1-like domain in the interval 1-71 (MSKDDLIQFT…LTKGRVIHRH (71 aa)).

It belongs to the IF-1 family. In terms of assembly, component of the 30S ribosomal translation pre-initiation complex which assembles on the 30S ribosome in the order IF-2 and IF-3, IF-1 and N-formylmethionyl-tRNA(fMet); mRNA recruitment can occur at any time during PIC assembly.

The protein localises to the cytoplasm. In terms of biological role, one of the essential components for the initiation of protein synthesis. Stabilizes the binding of IF-2 and IF-3 on the 30S subunit to which N-formylmethionyl-tRNA(fMet) subsequently binds. Helps modulate mRNA selection, yielding the 30S pre-initiation complex (PIC). Upon addition of the 50S ribosomal subunit IF-1, IF-2 and IF-3 are released leaving the mature 70S translation initiation complex. In Rickettsia akari (strain Hartford), this protein is Translation initiation factor IF-1.